Consider the following 111-residue polypeptide: Prostatic steroid-binding protein C1 (111 aa).

The N-terminal stretch at 1 to 23 (MSTIKLSLCLLIMLAVCCYEANA) is a signal peptide.

Belongs to the secretoglobin family. Lipophilin subfamily. Prostatein is composed of three different peptides called C1, C2 and C3. These form covalent C1:C3 (F) and C2:C3 (S) heterodimers whose noncovalent association forms tetrameric (C1:C3/C3:C2) prostatein molecules.

Its subcellular location is the secreted. Part of prostatein which is the major secretory glycoprotein of ventral prostate gland. This chain is Prostatic steroid-binding protein C1 (Psbpc1), found in Rattus norvegicus (Rat).